An 806-amino-acid chain; its full sequence is Leucine--tRNA ligase (806 aa).

The 'HIGH' region motif lies at Pro-40–His-51. The short motif at Lys-580 to Ser-584 is the 'KMSKS' region element. An ATP-binding site is contributed by Lys-583.

The protein belongs to the class-I aminoacyl-tRNA synthetase family.

It localises to the cytoplasm. The catalysed reaction is tRNA(Leu) + L-leucine + ATP = L-leucyl-tRNA(Leu) + AMP + diphosphate. In Ureaplasma urealyticum serovar 10 (strain ATCC 33699 / Western), this protein is Leucine--tRNA ligase.